A 221-amino-acid polypeptide reads, in one-letter code: Probable septum site-determining protein MinC (221 aa).

Belongs to the MinC family. As to quaternary structure, interacts with MinD and FtsZ.

In terms of biological role, cell division inhibitor that blocks the formation of polar Z ring septums. Rapidly oscillates between the poles of the cell to destabilize FtsZ filaments that have formed before they mature into polar Z rings. Prevents FtsZ polymerization. The chain is Probable septum site-determining protein MinC from Shewanella loihica (strain ATCC BAA-1088 / PV-4).